Here is a 309-residue protein sequence, read N- to C-terminus: Aromatic prenyltransferase (309 aa).

It belongs to the aromatic prenyltransferase family.

Prenyltransferase that attaches isoprenoid moieties to carbon atoms of aromatic substrates in an enzyme-catalyzed Friedel-Crafts reaction. Shows specificity for dimethylallyl diphosphate (DMAPP) and does not accept geranyl diphosphate (GPP) or isopentenyl diphosphate (IPP). Prenylates the artificial substrate 2,7-dihydroxynaphthalene (2,7-DHN), as well as dihydrophenazine-1-carboxylic acid and 4-hydroxybenzoic acid at lower levels. Only traces of products are detected with aspulvinone E or flaviolin as substrates; and no product is formed with L-tryptophan, L-tyrosine, or 4-hydroxyphenylpyruvate. Ptf seems no to be involved in the prenylation reaction in the biosynthesis of aspulvinone H and J and the physiological function of ptf remains unknown. The sequence is that of Aromatic prenyltransferase from Botryotinia fuckeliana (strain B05.10) (Noble rot fungus).